We begin with the raw amino-acid sequence, 345 residues long: Glycerol-3-phosphate dehydrogenase [NAD(P)+] (345 aa).

The NADPH site is built by Ser11, Trp12, His32, Arg33, and Lys106. Positions 106, 137, and 139 each coordinate sn-glycerol 3-phosphate. Ala141 is a binding site for NADPH. Sn-glycerol 3-phosphate contacts are provided by Lys192, Asp245, Ser255, Arg256, and Asn257. The active-site Proton acceptor is the Lys192. NADPH is bound at residue Arg256. Val280 and Glu282 together coordinate NADPH.

This sequence belongs to the NAD-dependent glycerol-3-phosphate dehydrogenase family.

Its subcellular location is the cytoplasm. It catalyses the reaction sn-glycerol 3-phosphate + NAD(+) = dihydroxyacetone phosphate + NADH + H(+). The enzyme catalyses sn-glycerol 3-phosphate + NADP(+) = dihydroxyacetone phosphate + NADPH + H(+). The protein operates within membrane lipid metabolism; glycerophospholipid metabolism. Does not seem to be inhibited by sn-glycerol 3-phosphate, in contrast to the E.coli homolog enzyme which is very sensitive to allosteric inhibition by G3P. Functionally, catalyzes the reduction of the glycolytic intermediate dihydroxyacetone phosphate (DHAP) to sn-glycerol 3-phosphate (G3P), the key precursor for phospholipid synthesis. This is Glycerol-3-phosphate dehydrogenase [NAD(P)+] from Bacillus subtilis (strain 168).